Consider the following 297-residue polypeptide: RNA polymerase sigma-F factor (297 aa).

Positions 1-46 (MTVPASTAPQVPPQQDPQVPHPQEPREEPHEEPPSPPAAPRPQSRG) are disordered. The segment covering 10–22 (QVPPQQDPQVPHP) has biased composition (pro residues). Over residues 23–33 (QEPREEPHEEP) the composition is skewed to basic and acidic residues. A Polymerase core binding motif is present at residues 101–114 (DVVQVGTIGLINAI). The segment at residues 264 to 283 (QSQISAELGVSQMHVSRLLA) is a DNA-binding region (H-T-H motif).

Belongs to the sigma-70 factor family. SigB subfamily.

Functionally, sigma factors are initiation factors that promote the attachment of RNA polymerase to specific initiation sites and are then released. This sigma factor is required for normal spore maturation. The polypeptide is RNA polymerase sigma-F factor (sigF) (Kitasatospora aureofaciens (Streptomyces aureofaciens)).